A 1621-amino-acid chain; its full sequence is Cilia- and flagella-associated protein 43 (1621 aa).

WD repeat units lie at residues 97–138, 141–180, 293–330, 334–373, 377–417, 464–503, 634–673, and 679–721; these read GAQL…PLCS, DSQT…NQYQ, LLEG…VKLE, NAQE…ETYK, VYSR…SVSS, LYCV…SFQV, GSQL…TMAQ, and YHNG…SSRL. 8 coiled-coil regions span residues 792–812, 850–870, 1026–1046, 1098–1118, 1150–1177, 1362–1389, 1451–1514, and 1591–1611; these read IKRK…AEKE, TEEQ…VRQE, CRQK…IQEI, VEEA…ALDD, TEEE…YSKE, DEKM…FQLD, IFQL…QEKQ, and AKIQ…LRMK.

Belongs to the CFAP43 family.

The protein localises to the cytoplasm. It localises to the cytoskeleton. Its subcellular location is the cilium axoneme. Functionally, involved in the regulation of the beating frequency of motile cilia in multiciliated cells of the larval epidermis. This is Cilia- and flagella-associated protein 43 (cfap43) from Xenopus laevis (African clawed frog).